Consider the following 250-residue polypeptide: tRNA (guanine-N(1)-)-methyltransferase (250 aa).

Residues Gly-116 and 136–141 contribute to the S-adenosyl-L-methionine site; that span reads IGDYVL.

It belongs to the RNA methyltransferase TrmD family. In terms of assembly, homodimer.

Its subcellular location is the cytoplasm. The catalysed reaction is guanosine(37) in tRNA + S-adenosyl-L-methionine = N(1)-methylguanosine(37) in tRNA + S-adenosyl-L-homocysteine + H(+). Functionally, specifically methylates guanosine-37 in various tRNAs. This chain is tRNA (guanine-N(1)-)-methyltransferase, found in Pseudomonas putida (strain W619).